Reading from the N-terminus, the 406-residue chain is Glutamyl-tRNA reductase (406 aa).

Residues 50–53 (TCNR), Ser107, 112–114 (EPQ), and Gln118 each bind substrate. Catalysis depends on Cys51, which acts as the Nucleophile. Position 187–192 (187–192 (GAGEMG)) interacts with NADP(+).

The protein belongs to the glutamyl-tRNA reductase family. Homodimer.

It carries out the reaction (S)-4-amino-5-oxopentanoate + tRNA(Glu) + NADP(+) = L-glutamyl-tRNA(Glu) + NADPH + H(+). The protein operates within porphyrin-containing compound metabolism; protoporphyrin-IX biosynthesis; 5-aminolevulinate from L-glutamyl-tRNA(Glu): step 1/2. Its function is as follows. Catalyzes the NADPH-dependent reduction of glutamyl-tRNA(Glu) to glutamate 1-semialdehyde (GSA). This is Glutamyl-tRNA reductase from Aquifex aeolicus (strain VF5).